Here is a 76-residue protein sequence, read N- to C-terminus: Small ribosomal subunit protein bS18 (76 aa).

Belongs to the bacterial ribosomal protein bS18 family. As to quaternary structure, part of the 30S ribosomal subunit. Forms a tight heterodimer with protein bS6.

In terms of biological role, binds as a heterodimer with protein bS6 to the central domain of the 16S rRNA, where it helps stabilize the platform of the 30S subunit. The protein is Small ribosomal subunit protein bS18 of Marinomonas sp. (strain MWYL1).